The primary structure comprises 430 residues: Enolase (430 aa).

Q163 contributes to the (2R)-2-phosphoglycerate binding site. E205 functions as the Proton donor in the catalytic mechanism. Mg(2+) contacts are provided by D242, E287, and D314. K339, R368, S369, and K390 together coordinate (2R)-2-phosphoglycerate. K339 acts as the Proton acceptor in catalysis.

This sequence belongs to the enolase family. Mg(2+) serves as cofactor.

Its subcellular location is the cytoplasm. The protein resides in the secreted. It is found in the cell surface. The enzyme catalyses (2R)-2-phosphoglycerate = phosphoenolpyruvate + H2O. It functions in the pathway carbohydrate degradation; glycolysis; pyruvate from D-glyceraldehyde 3-phosphate: step 4/5. In terms of biological role, catalyzes the reversible conversion of 2-phosphoglycerate (2-PG) into phosphoenolpyruvate (PEP). It is essential for the degradation of carbohydrates via glycolysis. This chain is Enolase, found in Clostridioides difficile (strain 630) (Peptoclostridium difficile).